The following is a 1489-amino-acid chain: WD repeat-containing protein 7 (1489 aa).

WD repeat units follow at residues 17 to 56 (APTH…EVNP), 62 to 104 (GHTA…CIEF), 156 to 199 (ISPD…SGMQ), 324 to 366 (VICP…EKQE), 404 to 443 (NEPL…IVQL), 462 to 507 (GHRN…MKHI), and 558 to 597 (RHLF…LDRC). Disordered stretches follow at residues 754–783 (IKEH…YRAS) and 911–947 (GDHM…QGQI). Basic and acidic residues predominate over residues 767–782 (EARRQSREDSDPEYRA). Residue serine 935 is modified to Phosphoserine. WD repeat units follow at residues 1350 to 1389 (PAIC…CQTI) and 1391 to 1431 (GHKG…LGSI). The residue at position 1455 (serine 1455) is a Phosphoserine.

The sequence is that of WD repeat-containing protein 7 (Wdr7) from Mus musculus (Mouse).